A 65-amino-acid chain; its full sequence is Large ribosomal subunit protein bL35 (65 aa).

Over residues 1 to 16 the composition is skewed to basic residues; sequence MPKMKTKSSAKKRFKV. The segment at 1–26 is disordered; sequence MPKMKTKSSAKKRFKVRSSGGIKRSQ.

The protein belongs to the bacterial ribosomal protein bL35 family.

The protein is Large ribosomal subunit protein bL35 of Azoarcus sp. (strain BH72).